The primary structure comprises 389 residues: Lipid-A-disaccharide synthase (389 aa).

This sequence belongs to the LpxB family.

The enzyme catalyses a lipid X + a UDP-2-N,3-O-bis[(3R)-3-hydroxyacyl]-alpha-D-glucosamine = a lipid A disaccharide + UDP + H(+). The protein operates within bacterial outer membrane biogenesis; LPS lipid A biosynthesis. Functionally, condensation of UDP-2,3-diacylglucosamine and 2,3-diacylglucosamine-1-phosphate to form lipid A disaccharide, a precursor of lipid A, a phosphorylated glycolipid that anchors the lipopolysaccharide to the outer membrane of the cell. The chain is Lipid-A-disaccharide synthase from Paraburkholderia xenovorans (strain LB400).